The primary structure comprises 352 residues: N-acetyl-gamma-glutamyl-phosphate reductase (352 aa).

C156 is an active-site residue.

It belongs to the NAGSA dehydrogenase family. Type 1 subfamily.

It is found in the cytoplasm. The catalysed reaction is N-acetyl-L-glutamate 5-semialdehyde + phosphate + NADP(+) = N-acetyl-L-glutamyl 5-phosphate + NADPH + H(+). Its pathway is amino-acid biosynthesis; L-arginine biosynthesis; N(2)-acetyl-L-ornithine from L-glutamate: step 3/4. Catalyzes the NADPH-dependent reduction of N-acetyl-5-glutamyl phosphate to yield N-acetyl-L-glutamate 5-semialdehyde. This Rhodospirillum rubrum (strain ATCC 11170 / ATH 1.1.1 / DSM 467 / LMG 4362 / NCIMB 8255 / S1) protein is N-acetyl-gamma-glutamyl-phosphate reductase.